The sequence spans 134 residues: Histone H2A.Z (134 aa).

The segment at 1–31 (MSGKAHGGKGKSGAKDSGSLRSQSSSARAGL) is disordered. An N-acetylserine modification is found at S2. 4 positions are modified to N6-acetyllysine: K4, K9, K11, and K15. Residues 15-31 (KDSGSLRSQSSSARAGL) show a composition bias toward low complexity. The interaction with VPS72 stretch occupies residues 98 to 108 (GDDELDSLIRA).

Belongs to the histone H2A family. As to quaternary structure, the nucleosome is a histone octamer containing two molecules each of H2A, H2B, H3 and H4 assembled in one H3-H4 heterotetramer and two H2A-H2B heterodimers. The octamer wraps approximately 147 bp of DNA. H2A or its variant H2A.Z forms a heterodimer with H2B. H2A.Z associates with the VPS72/SWC2 subunit of the SWR1 chromatin remodeling complex. Also interacts with RBP1/DNA-directed RNA polymerase II largest subunit. Interacts with NAP1. Interacts with MPS3. Acetylated by ESA1, a component of the NuA4 histone acetyltransferase (HAT) complex, and/or by GCN5, a component of the SAGA complex, to form H2A.ZK3Ac, H2A.ZK8Ac, H2A.ZK10Ac and H2A.ZK14Ac once deposited into chromatin. Acetylation is required for function at telomeres. H2A.ZK14Ac is acetylated at the promoters of active genes.

It localises to the nucleus. The protein resides in the chromosome. Its function is as follows. Variant histone H2A which can replace H2A in some nucleosomes. Nucleosomes wrap and compact DNA into chromatin, limiting DNA accessibility to the cellular machineries which require DNA as a template. Histones thereby play a central role in transcription regulation, DNA repair, DNA replication and chromosomal stability. DNA accessibility is regulated via a complex set of post-translational modifications of histones, also called histone code, and nucleosome remodeling. This variant is enriched at promoters, it may keep them in a repressed state until the appropriate activation signal is received. Near telomeres, it may counteract gene silencing caused by the spread of heterochromatin proteins. Required for the RNA polymerase II and SPT15/TBP recruitment to the target genes. Involved in chromosome stability. Required to target MPS3 to the inner membrane of the nuclear envelope. In Saccharomyces cerevisiae (strain ATCC 204508 / S288c) (Baker's yeast), this protein is Histone H2A.Z.